A 201-amino-acid chain; its full sequence is 3-isopropylmalate dehydratase small subunit (201 aa).

This sequence belongs to the LeuD family. LeuD type 1 subfamily. Heterodimer of LeuC and LeuD.

The catalysed reaction is (2R,3S)-3-isopropylmalate = (2S)-2-isopropylmalate. Its pathway is amino-acid biosynthesis; L-leucine biosynthesis; L-leucine from 3-methyl-2-oxobutanoate: step 2/4. In terms of biological role, catalyzes the isomerization between 2-isopropylmalate and 3-isopropylmalate, via the formation of 2-isopropylmaleate. This is 3-isopropylmalate dehydratase small subunit from Cereibacter sphaeroides (strain KD131 / KCTC 12085) (Rhodobacter sphaeroides).